We begin with the raw amino-acid sequence, 203 residues long: Large ribosomal subunit protein uL6 (203 aa).

Belongs to the universal ribosomal protein uL6 family. Part of the 50S ribosomal subunit.

This protein binds to the 23S rRNA, and is important in its secondary structure. It is located near the subunit interface in the base of the L7/L12 stalk, and near the tRNA binding site of the peptidyltransferase center. In Hyphomonas neptunium (strain ATCC 15444), this protein is Large ribosomal subunit protein uL6.